A 418-amino-acid chain; its full sequence is Cobalt-zinc-cadmium resistance protein CzcC (418 aa).

A signal peptide spans 1 to 22; that stretch reads MRRLFLPLGLAVAFLSPNFAVA.

This sequence belongs to the outer membrane factor (OMF) (TC 1.B.17) family.

The protein resides in the cell outer membrane. CzcC protein appears to modify the specificity of the system, perhaps by acting on the CzcB protein. When the CzcC protein is added to CzcA and CzcB, the efflux system gains specificity for cadmium and cobalt. The polypeptide is Cobalt-zinc-cadmium resistance protein CzcC (czcC) (Cupriavidus metallidurans (strain ATCC 43123 / DSM 2839 / NBRC 102507 / CH34) (Ralstonia metallidurans)).